A 505-amino-acid chain; its full sequence is Cytochrome c oxidase subunit 1 (505 aa).

Residues 14–34 traverse the membrane as a helical segment; that stretch reads LLYLVFAFFGGLLGTSLSMLI. The Ca(2+) site is built by E37 and G42. A run of 6 helical transmembrane segments spans residues 55–75, 98–118, 143–163, 180–200, 229–249, and 261–281; these read VIITGHGIIMLLFMVMPALFG, NISFWLNPPALALLLLSTLVE, AILSLHLNGLSSILGAVNMLV, LFVWAIALTAVLVILAVPVLA, LFWFFGHPEVYILILPAFGIV, and VFGLTGMICAMGAISLLGFIV. Position 60 (H60) interacts with Fe(II)-heme a. 2 residues coordinate Cu cation: H235 and Y239. The 1'-histidyl-3'-tyrosine (His-Tyr) cross-link spans 235–239; the sequence is HPEVY. Y239 serves as a coordination point for O2. Cu cation contacts are provided by H284 and H285. Helical transmembrane passes span 302–322 and 332–352; these read ATMIIAVPTGMKIFSWMATIY and MWFAVGFICLFTLGGVTGVVL. Residues H362 and D363 each coordinate Mg(2+). H370 provides a ligand contact to heme a3. Fe(II)-heme a is bound at residue H372. Transmembrane regions (helical) follow at residues 374-394, 408-428, and 446-466; these read VLSMGAVFGIFAGVYFWGNLI, FWLLFIGVNLTFFPQHFLGLA, and AVSSFGASISFISVIVFATTF.

This sequence belongs to the heme-copper respiratory oxidase family. As to quaternary structure, component of the cytochrome c oxidase (complex IV, CIV), a multisubunit enzyme composed of a catalytic core of 3 subunits and several supernumerary subunits. The complex exists as a monomer or a dimer and forms supercomplexes (SCs) in the inner mitochondrial membrane with ubiquinol-cytochrome c oxidoreductase (cytochrome b-c1 complex, complex III, CIII). Heme serves as cofactor. Cu cation is required as a cofactor.

Its subcellular location is the mitochondrion inner membrane. It catalyses the reaction 4 Fe(II)-[cytochrome c] + O2 + 8 H(+)(in) = 4 Fe(III)-[cytochrome c] + 2 H2O + 4 H(+)(out). Its pathway is energy metabolism; oxidative phosphorylation. Component of the cytochrome c oxidase, the last enzyme in the mitochondrial electron transport chain which drives oxidative phosphorylation. The respiratory chain contains 3 multisubunit complexes succinate dehydrogenase (complex II, CII), ubiquinol-cytochrome c oxidoreductase (cytochrome b-c1 complex, complex III, CIII) and cytochrome c oxidase (complex IV, CIV), that cooperate to transfer electrons derived from NADH and succinate to molecular oxygen, creating an electrochemical gradient over the inner membrane that drives transmembrane transport and the ATP synthase. Cytochrome c oxidase is the component of the respiratory chain that catalyzes the reduction of oxygen to water. Electrons originating from reduced cytochrome c in the intermembrane space (IMS) are transferred via the dinuclear copper A center (CU(A)) of subunit 2 and heme A of subunit 1 to the active site in subunit 1, a binuclear center (BNC) formed by heme A3 and copper B (CU(B)). The BNC reduces molecular oxygen to 2 water molecules using 4 electrons from cytochrome c in the IMS and 4 protons from the mitochondrial matrix. This chain is Cytochrome c oxidase subunit 1 (COX1), found in Chlamydomonas reinhardtii (Chlamydomonas smithii).